The sequence spans 102 residues: Large ribosomal subunit protein bL21 (102 aa).

The protein belongs to the bacterial ribosomal protein bL21 family. In terms of assembly, part of the 50S ribosomal subunit. Contacts protein L20.

Its function is as follows. This protein binds to 23S rRNA in the presence of protein L20. The sequence is that of Large ribosomal subunit protein bL21 from Latilactobacillus sakei subsp. sakei (strain 23K) (Lactobacillus sakei subsp. sakei).